Reading from the N-terminus, the 292-residue chain is 4-diphosphocytidyl-2-C-methyl-D-erythritol kinase (292 aa).

Residue Lys10 is part of the active site. Residue 100–110 (PIGSGLGGGSS) participates in ATP binding. Asp142 is an active-site residue.

Belongs to the GHMP kinase family. IspE subfamily. As to quaternary structure, homodimer.

It catalyses the reaction 4-CDP-2-C-methyl-D-erythritol + ATP = 4-CDP-2-C-methyl-D-erythritol 2-phosphate + ADP + H(+). Its pathway is isoprenoid biosynthesis; isopentenyl diphosphate biosynthesis via DXP pathway; isopentenyl diphosphate from 1-deoxy-D-xylulose 5-phosphate: step 3/6. In terms of biological role, catalyzes the phosphorylation of the position 2 hydroxy group of 4-diphosphocytidyl-2C-methyl-D-erythritol. The polypeptide is 4-diphosphocytidyl-2-C-methyl-D-erythritol kinase (Buchnera aphidicola subsp. Schizaphis graminum (strain Sg)).